The chain runs to 790 residues: Alpha,alpha-trehalose-phosphate synthase [UDP-forming] B (790 aa).

This sequence in the N-terminal section; belongs to the glycosyltransferase 20 family. The protein in the C-terminal section; belongs to the trehalose phosphatase family.

It catalyses the reaction D-glucose 6-phosphate + UDP-alpha-D-glucose = alpha,alpha-trehalose 6-phosphate + UDP + H(+). Synthesizes trehalose 6-phosphate, the precursor for the production of trehalose, the main carbohydrate storage reserve of the dormant spore. Trehalose accumulates in both prestalk and prespore cells and then is rapidly metabolized during terminal differentiation of stalk cells, while being stored in spores, where it serves as the principal energy and carbon source for germination. The sequence is that of Alpha,alpha-trehalose-phosphate synthase [UDP-forming] B (tpsB) from Dictyostelium discoideum (Social amoeba).